The primary structure comprises 235 residues: Methylosome subunit pICln (235 aa).

The disordered stretch occupies residues 1–21; the sequence is MSFLKSFPPPGSAEGLRQQQP. Residue Ser2 is modified to N-acetylserine. Residues Ser100, Ser142, Ser191, Ser193, Ser196, and Ser208 each carry the phosphoserine modification. The tract at residues 133–157 is disordered; the sequence is LHPDPEDEDSDDYDGEEYDVEAHEQ. A compositionally biased stretch (acidic residues) spans 137–151; it reads PEDEDSDDYDGEEYD. Residues 195 to 217 are disordered; the sequence is SSQYNMAGVRTEDSTRDYEDGME. The span at 204-213 shows a compositional bias: basic and acidic residues; it reads RTEDSTRDYE. Thr221 carries the phosphothreonine modification.

It belongs to the pICln (TC 1.A.47) family. As to quaternary structure, component of the methylosome, a 20S complex containing at least PRMT5/SKB1, WDR77/MEP50 and CLNS1A/pICln. May mediate SNRPD1 and SNRPD3 methylation. Forms a 6S pICln-Sm complex composed of CLNS1A/pICln, SNRPD1, SNRPD2, SNRPE, SNRPF and SNRPG; ring-like structure where CLNS1A/pICln mimics additional Sm proteins and which is unable to assemble into the core snRNP. Interacts with LSM10 and LSM11.

The protein resides in the cytoplasm. Its subcellular location is the cytosol. It localises to the nucleus. It is found in the cytoskeleton. Its function is as follows. Involved in both the assembly of spliceosomal snRNPs and the methylation of Sm proteins. Chaperone that regulates the assembly of spliceosomal U1, U2, U4 and U5 small nuclear ribonucleoproteins (snRNPs), the building blocks of the spliceosome, and thereby plays an important role in the splicing of cellular pre-mRNAs. Most spliceosomal snRNPs contain a common set of Sm proteins SNRPB, SNRPD1, SNRPD2, SNRPD3, SNRPE, SNRPF and SNRPG that assemble in a heptameric protein ring on the Sm site of the small nuclear RNA to form the core snRNP (Sm core). In the cytosol, the Sm proteins SNRPD1, SNRPD2, SNRPE, SNRPF and SNRPG are trapped in an inactive 6S pICln-Sm complex by the chaperone CLNS1A that controls the assembly of the core snRNP. Dissociation by the SMN complex of CLNS1A from the trapped Sm proteins and their transfer to an SMN-Sm complex triggers the assembly of core snRNPs and their transport to the nucleus. The protein is Methylosome subunit pICln (CLNS1A) of Canis lupus familiaris (Dog).